The sequence spans 1034 residues: Ice nucleation protein InaU (1034 aa).

Residues 162-993 are octapeptide periodicity; the sequence is ATYGSTLSGT…LTAGENSVLI (832 aa). Disordered regions lie at residues 260-287, 311-342, 356-383, 407-438, 452-480, and 570-597; these read YGST…KGSD, TQTA…GYGS, YGST…GSDL, and AREG…TGYG. 6 stretches are compositionally biased toward polar residues: residues 261-286, 311-334, 357-382, 407-430, 453-480, and 580-592; these read GSTQ…QKGS, TQTA…QKGS, GSTQ…GSDL, and YGST…NSDL.

This sequence belongs to the bacterial ice nucleation protein family.

It localises to the cell outer membrane. Ice nucleation proteins enable bacteria to nucleate crystallization in supercooled water. The sequence is that of Ice nucleation protein InaU (inaU) from Pantoea ananas (Erwinia uredovora).